The primary structure comprises 237 residues: Ribonuclease PH (237 aa).

Residues arginine 86 and 124-126 (GTR) contribute to the phosphate site.

This sequence belongs to the RNase PH family. Homohexameric ring arranged as a trimer of dimers.

It catalyses the reaction tRNA(n+1) + phosphate = tRNA(n) + a ribonucleoside 5'-diphosphate. In terms of biological role, phosphorolytic 3'-5' exoribonuclease that plays an important role in tRNA 3'-end maturation. Removes nucleotide residues following the 3'-CCA terminus of tRNAs; can also add nucleotides to the ends of RNA molecules by using nucleoside diphosphates as substrates, but this may not be physiologically important. Probably plays a role in initiation of 16S rRNA degradation (leading to ribosome degradation) during starvation. The sequence is that of Ribonuclease PH from Shewanella piezotolerans (strain WP3 / JCM 13877).